A 183-amino-acid polypeptide reads, in one-letter code: Endoribonuclease YbeY (183 aa).

Residues H118, H122, and H128 each contribute to the Zn(2+) site. A disordered region spans residues 156–183 (EREQAQRSADSAVLGAVGLEEQDGPGTH).

The protein belongs to the endoribonuclease YbeY family. Requires Zn(2+) as cofactor.

The protein resides in the cytoplasm. Its function is as follows. Single strand-specific metallo-endoribonuclease involved in late-stage 70S ribosome quality control and in maturation of the 3' terminus of the 16S rRNA. The chain is Endoribonuclease YbeY from Saccharopolyspora erythraea (strain ATCC 11635 / DSM 40517 / JCM 4748 / NBRC 13426 / NCIMB 8594 / NRRL 2338).